Here is an 89-residue protein sequence, read N- to C-terminus: Small ribosomal subunit protein bS20 (89 aa).

This sequence belongs to the bacterial ribosomal protein bS20 family.

Functionally, binds directly to 16S ribosomal RNA. This chain is Small ribosomal subunit protein bS20, found in Stenotrophomonas maltophilia (strain K279a).